The following is a 421-amino-acid chain: MTVELEKIAGSFFISKGWKTFVHRTGLLSGQYIRFQVLTPSKINVLLFDKKKDSKLPMIPSSKKQIKTAPKRSTGITINDMPTSKHASMLISHTSNKETSSDSRTESMTDIPSSSDNSGETTRSFDDLCFCARNTAVTPDIKNYISIIGQFLQRSSKFYIVTMNNTFMKQDRLCKLSLLTNMLMCDVLTDTCRFTLPSFLMAFFQNTVQTQTLTTCADSPYPYEHLRKTEPACREIDEVTLTMCAHSPYPYEYLRKTELACREIDEVTTGASLSTNILPPYTSSPLEAISGGEDIWWLAASRMGWRGDVAAVQADSVDGNNSPFLCARSPTIGNGGADQPYLMVGKPHGWPCWGWDGAEMWLWCQSKNSGHCHIGWPVGVLVKGGRIYPGGGLPSKELAGMIGPYASGDWFELKRELPAKA.

Residues M1 to K51 constitute a DNA-binding region (TF-B3). Residues S92 to T121 are disordered. Residues S95–S107 show a composition bias toward basic and acidic residues. Residues M108–T121 show a composition bias toward polar residues.

The protein localises to the nucleus. This is Putative B3 domain-containing protein Os08g0333500 from Oryza sativa subsp. japonica (Rice).